Consider the following 803-residue polypeptide: Phosphoribosylformylglycinamidine synthase subunit PurL (803 aa).

Residue His-65 is part of the active site. ATP is bound by residues Tyr-68 and Lys-107. Glu-109 serves as a coordination point for Mg(2+). Residues 110 to 113 and Arg-132 each bind substrate; that span reads SHNH. The active-site Proton acceptor is His-111. Residue Asp-133 coordinates Mg(2+). Gln-256 contacts substrate. Mg(2+) is bound at residue Asp-284. A substrate-binding site is contributed by 328 to 330; that stretch reads ESQ. ATP is bound by residues Asn-537 and Gly-574. Residue Asn-575 participates in Mg(2+) binding. Position 577 (Ser-577) interacts with substrate.

This sequence belongs to the FGAMS family. Monomer. Part of the FGAM synthase complex composed of 1 PurL, 1 PurQ and 2 PurS subunits.

The protein resides in the cytoplasm. The catalysed reaction is N(2)-formyl-N(1)-(5-phospho-beta-D-ribosyl)glycinamide + L-glutamine + ATP + H2O = 2-formamido-N(1)-(5-O-phospho-beta-D-ribosyl)acetamidine + L-glutamate + ADP + phosphate + H(+). It functions in the pathway purine metabolism; IMP biosynthesis via de novo pathway; 5-amino-1-(5-phospho-D-ribosyl)imidazole from N(2)-formyl-N(1)-(5-phospho-D-ribosyl)glycinamide: step 1/2. Functionally, part of the phosphoribosylformylglycinamidine synthase complex involved in the purines biosynthetic pathway. Catalyzes the ATP-dependent conversion of formylglycinamide ribonucleotide (FGAR) and glutamine to yield formylglycinamidine ribonucleotide (FGAM) and glutamate. The FGAM synthase complex is composed of three subunits. PurQ produces an ammonia molecule by converting glutamine to glutamate. PurL transfers the ammonia molecule to FGAR to form FGAM in an ATP-dependent manner. PurS interacts with PurQ and PurL and is thought to assist in the transfer of the ammonia molecule from PurQ to PurL. The sequence is that of Phosphoribosylformylglycinamidine synthase subunit PurL from Prochlorococcus marinus (strain NATL1A).